The primary structure comprises 173 residues: MTTMAARRSEAAPAPQQLRGSQLKQLRELFRRFDMNGDGSLTQLELAALLRSLGLRPTGDEVHALLAGMDANGNGSVEFDELAAAIAPVLTTQTHLVDQAQLLEVFRAFDRDGNGFISAAELARSMARLGQPLTFEELTRMMRDADTDGDGVISFKEFAAVMAKSALDFLGVA.

4 EF-hand domains span residues 21 to 56 (SQLKQLRELFRRFDMNGDGSLTQLELAALLRSLGLR), 57 to 92 (PTGDEVHALLAGMDANGNGSVEFDELAAAIAPVLTT), 97 to 132 (VDQAQLLEVFRAFDRDGNGFISAAELARSMARLGQP), and 133 to 168 (LTFEELTRMMRDADTDGDGVISFKEFAAVMAKSALD). Positions 34, 36, 38, 40, 45, 70, 72, 74, 76, 81, 110, 112, 114, 121, 146, 148, 150, and 157 each coordinate Ca(2+).

Functionally, potential calcium sensor. The polypeptide is Probable calcium-binding protein CML14 (CML14) (Oryza sativa subsp. japonica (Rice)).